A 347-amino-acid polypeptide reads, in one-letter code: Phenylalanine--tRNA ligase alpha subunit (347 aa).

Glutamate 259 contributes to the Mg(2+) binding site.

Belongs to the class-II aminoacyl-tRNA synthetase family. Phe-tRNA synthetase alpha subunit type 1 subfamily. As to quaternary structure, tetramer of two alpha and two beta subunits. It depends on Mg(2+) as a cofactor.

Its subcellular location is the cytoplasm. The enzyme catalyses tRNA(Phe) + L-phenylalanine + ATP = L-phenylalanyl-tRNA(Phe) + AMP + diphosphate + H(+). This chain is Phenylalanine--tRNA ligase alpha subunit, found in Oenococcus oeni (strain ATCC BAA-331 / PSU-1).